A 424-amino-acid chain; its full sequence is Enolase (424 aa).

(2R)-2-phosphoglycerate is bound at residue Gln165. Glu207 serves as the catalytic Proton donor. The Mg(2+) site is built by Asp244, Glu283, and Asp310. The (2R)-2-phosphoglycerate site is built by Lys335, Arg364, Ser365, and Lys386. Residue Lys335 is the Proton acceptor of the active site.

Belongs to the enolase family. Requires Mg(2+) as cofactor.

Its subcellular location is the cytoplasm. It is found in the secreted. The protein resides in the cell surface. The catalysed reaction is (2R)-2-phosphoglycerate = phosphoenolpyruvate + H2O. It functions in the pathway carbohydrate degradation; glycolysis; pyruvate from D-glyceraldehyde 3-phosphate: step 4/5. Catalyzes the reversible conversion of 2-phosphoglycerate (2-PG) into phosphoenolpyruvate (PEP). It is essential for the degradation of carbohydrates via glycolysis. The chain is Enolase from Chlamydia trachomatis serovar L2 (strain ATCC VR-902B / DSM 19102 / 434/Bu).